We begin with the raw amino-acid sequence, 182 residues long: Oligoribonuclease (182 aa).

One can recognise an Exonuclease domain in the interval 8 to 171 (LIWIDLEMTG…DDIRESIKEL (164 aa)). Residue tyrosine 129 is part of the active site.

This sequence belongs to the oligoribonuclease family.

Its subcellular location is the cytoplasm. Its function is as follows. 3'-to-5' exoribonuclease specific for small oligoribonucleotides. This is Oligoribonuclease from Actinobacillus succinogenes (strain ATCC 55618 / DSM 22257 / CCUG 43843 / 130Z).